The following is a 410-amino-acid chain: Cysteine desulfurase IscS (410 aa).

Pyridoxal 5'-phosphate-binding positions include 80–81, asparagine 160, glutamine 188, and 208–210; these read AT and SGH. An N6-(pyridoxal phosphate)lysine modification is found at lysine 211. Pyridoxal 5'-phosphate is bound at residue threonine 248. The Cysteine persulfide intermediate role is filled by cysteine 334. A [2Fe-2S] cluster-binding site is contributed by cysteine 334.

Belongs to the class-V pyridoxal-phosphate-dependent aminotransferase family. NifS/IscS subfamily. Homodimer. Forms a heterotetramer with IscU, interacts with other sulfur acceptors. It depends on pyridoxal 5'-phosphate as a cofactor.

It is found in the cytoplasm. The enzyme catalyses (sulfur carrier)-H + L-cysteine = (sulfur carrier)-SH + L-alanine. The protein operates within cofactor biosynthesis; iron-sulfur cluster biosynthesis. Master enzyme that delivers sulfur to a number of partners involved in Fe-S cluster assembly, tRNA modification or cofactor biosynthesis. Catalyzes the removal of elemental sulfur atoms from cysteine to produce alanine. Functions as a sulfur delivery protein for Fe-S cluster synthesis onto IscU, an Fe-S scaffold assembly protein, as well as other S acceptor proteins. This is Cysteine desulfurase IscS from Rickettsia typhi (strain ATCC VR-144 / Wilmington).